The chain runs to 86 residues: Signal recognition particle 9 kDa protein (86 aa).

The protein belongs to the SRP9 family. In terms of assembly, heterodimer with SRP14; binds RNA as heterodimer. Component of a signal recognition particle complex that consists of a 7SL RNA molecule of 300 nucleotides and six protein subunits: SRP72, SRP68, SRP54, SRP19, SRP14 and SRP9.

It is found in the cytoplasm. Functionally, component of the signal recognition particle (SRP) complex, a ribonucleoprotein complex that mediates the cotranslational targeting of secretory and membrane proteins to the endoplasmic reticulum (ER). SRP9 together with SRP14 and the Alu portion of the SRP RNA, constitutes the elongation arrest domain of SRP. The complex of SRP9 and SRP14 is required for SRP RNA binding. This is Signal recognition particle 9 kDa protein (Srp9) from Mus musculus (Mouse).